The sequence spans 256 residues: Phosphate import ATP-binding protein PstB (256 aa).

One can recognise an ABC transporter domain in the interval 10–251 (IRTVNVNFYY…PEQKQTEDYI (242 aa)). 42–49 (GPSGCGKS) is a binding site for ATP.

It belongs to the ABC transporter superfamily. Phosphate importer (TC 3.A.1.7) family. As to quaternary structure, the complex is composed of two ATP-binding proteins (PstB), two transmembrane proteins (PstC and PstA) and a solute-binding protein (PstS).

Its subcellular location is the cell inner membrane. It carries out the reaction phosphate(out) + ATP + H2O = ADP + 2 phosphate(in) + H(+). In terms of biological role, part of the ABC transporter complex PstSACB involved in phosphate import. Responsible for energy coupling to the transport system. The protein is Phosphate import ATP-binding protein PstB of Syntrophus aciditrophicus (strain SB).